A 37-amino-acid chain; its full sequence is uncharacterized protein (37 aa).

Residues 17 to 37 (TFVLIVVLFILLIIVGAAFIC) form a helical membrane-spanning segment.

It belongs to the SscA family.

The protein resides in the membrane. This is an uncharacterized protein from Bacillus subtilis (strain 168).